A 376-amino-acid polypeptide reads, in one-letter code: Carbamoyl phosphate synthase small chain (376 aa).

The interval 1-181 is nucleophile; that stretch reads MSKAVLVLED…VEPDGPPGVS (181 aa). Residues 1–183 are CPSase; that stretch reads MSKAVLVLED…PDGPPGVSRF (183 aa). The L-glutamine site is built by serine 46, glycine 232, glycine 234, phenylalanine 261, glutamine 264, asparagine 302, glycine 304, and phenylalanine 305. The Glutamine amidotransferase type-1 domain maps to 184 to 376; sequence TVAALDLGIK…FVELMAGEGR (193 aa). Active-site residues include histidine 350 and glutamate 352.

The protein belongs to the CarA family. As to quaternary structure, composed of two chains; the small (or glutamine) chain promotes the hydrolysis of glutamine to ammonia, which is used by the large (or ammonia) chain to synthesize carbamoyl phosphate. Tetramer of heterodimers (alpha,beta)4.

The catalysed reaction is hydrogencarbonate + L-glutamine + 2 ATP + H2O = carbamoyl phosphate + L-glutamate + 2 ADP + phosphate + 2 H(+). The enzyme catalyses L-glutamine + H2O = L-glutamate + NH4(+). The protein operates within amino-acid biosynthesis; L-arginine biosynthesis; carbamoyl phosphate from bicarbonate: step 1/1. It participates in pyrimidine metabolism; UMP biosynthesis via de novo pathway; (S)-dihydroorotate from bicarbonate: step 1/3. Its function is as follows. Small subunit of the glutamine-dependent carbamoyl phosphate synthetase (CPSase). CPSase catalyzes the formation of carbamoyl phosphate from the ammonia moiety of glutamine, carbonate, and phosphate donated by ATP, constituting the first step of 2 biosynthetic pathways, one leading to arginine and/or urea and the other to pyrimidine nucleotides. The small subunit (glutamine amidotransferase) binds and cleaves glutamine to supply the large subunit with the substrate ammonia. This is Carbamoyl phosphate synthase small chain from Mycobacterium tuberculosis (strain CDC 1551 / Oshkosh).